A 3079-amino-acid polypeptide reads, in one-letter code: Inhibitory regulator protein IRA2 (3079 aa).

The disordered stretch occupies residues 392 to 554 (NQNAHQGSSS…RASYDAHKTG (163 aa)). Positions 399–416 (SSSPSSSSPSSPPSSSSS) are enriched in low complexity. Polar residues predominate over residues 417 to 442 (DNNNQNIIAKSLSRQLSHHQSYIQQQ). The segment covering 449–477 (SSWTTNSQSSTSLSSSTSNSTTTDFSTHT) has biased composition (low complexity). Over residues 488–497 (DTPTMSNITI) the composition is skewed to polar residues. Residues 498–528 (SASSLLSQTPTPTTQLQQRLNSAAAAAAAAA) show a composition bias toward low complexity. Positions 529-546 (SPSNSTPTGYTAEQQSRA) are enriched in polar residues. T635 is subject to Phosphothreonine. Disordered regions lie at residues 867 to 898 (FKGS…PLGL), 912 to 935 (GSST…LSSD), and 952 to 980 (GPSS…VQRP). 2 stretches are compositionally biased toward low complexity: residues 873-894 (SLCS…TPVS) and 921-934 (NVNS…NLSS). The span at 961 to 980 (IPTTLTSPPGTEKSSPVQRP) shows a compositional bias: polar residues. Residues 1717-1922 (NATHIVVAQL…DRIFRFLAEL (206 aa)) form the Ras-GAP domain.

It localises to the cytoplasm. Inhibitory regulator of the Ras-cyclic AMP pathway. Stimulates the GTPase activity of Ras proteins. The chain is Inhibitory regulator protein IRA2 (IRA2) from Saccharomyces cerevisiae (strain ATCC 204508 / S288c) (Baker's yeast).